Consider the following 198-residue polypeptide: Recombination protein RecR (198 aa).

A C4-type zinc finger spans residues 57 to 72 (CSVCGHITDRDPCYIC). A Toprim domain is found at 80–175 (SVVCVVQEPK…KVTRIAHGLP (96 aa)).

The protein belongs to the RecR family.

May play a role in DNA repair. It seems to be involved in an RecBC-independent recombinational process of DNA repair. It may act with RecF and RecO. The polypeptide is Recombination protein RecR (Bacillus cytotoxicus (strain DSM 22905 / CIP 110041 / 391-98 / NVH 391-98)).